A 291-amino-acid polypeptide reads, in one-letter code: Formamidopyrimidine-DNA glycosylase (291 aa).

P2 functions as the Schiff-base intermediate with DNA in the catalytic mechanism. Residue E3 is the Proton donor of the active site. K58 acts as the Proton donor; for beta-elimination activity in catalysis. Residues H100, R123, and K166 each coordinate DNA. The FPG-type zinc-finger motif lies at S257–K291. R281 functions as the Proton donor; for delta-elimination activity in the catalytic mechanism.

It belongs to the FPG family. In terms of assembly, monomer. It depends on Zn(2+) as a cofactor.

The catalysed reaction is Hydrolysis of DNA containing ring-opened 7-methylguanine residues, releasing 2,6-diamino-4-hydroxy-5-(N-methyl)formamidopyrimidine.. The enzyme catalyses 2'-deoxyribonucleotide-(2'-deoxyribose 5'-phosphate)-2'-deoxyribonucleotide-DNA = a 3'-end 2'-deoxyribonucleotide-(2,3-dehydro-2,3-deoxyribose 5'-phosphate)-DNA + a 5'-end 5'-phospho-2'-deoxyribonucleoside-DNA + H(+). Its function is as follows. Involved in base excision repair of DNA damaged by oxidation or by mutagenic agents. Acts as a DNA glycosylase that recognizes and removes damaged bases. Has a preference for oxidized purines, such as 7,8-dihydro-8-oxoguanine (8-oxoG). Has AP (apurinic/apyrimidinic) lyase activity and introduces nicks in the DNA strand. Cleaves the DNA backbone by beta-delta elimination to generate a single-strand break at the site of the removed base with both 3'- and 5'-phosphates. In Bartonella bacilliformis (strain ATCC 35685 / KC583 / Herrer 020/F12,63), this protein is Formamidopyrimidine-DNA glycosylase.